A 294-amino-acid chain; its full sequence is Pyridoxal 5'-phosphate synthase subunit PdxS (294 aa).

D-ribose 5-phosphate is bound at residue Asp24. The Schiff-base intermediate with D-ribose 5-phosphate role is filled by Lys81. Gly153 is a D-ribose 5-phosphate binding site. Position 165 (Arg165) interacts with D-glyceraldehyde 3-phosphate. D-ribose 5-phosphate-binding positions include Gly214 and Gly235–Ser236.

Belongs to the PdxS/SNZ family. In terms of assembly, in the presence of PdxT, forms a dodecamer of heterodimers.

It catalyses the reaction aldehydo-D-ribose 5-phosphate + D-glyceraldehyde 3-phosphate + L-glutamine = pyridoxal 5'-phosphate + L-glutamate + phosphate + 3 H2O + H(+). The protein operates within cofactor biosynthesis; pyridoxal 5'-phosphate biosynthesis. Its function is as follows. Catalyzes the formation of pyridoxal 5'-phosphate from ribose 5-phosphate (RBP), glyceraldehyde 3-phosphate (G3P) and ammonia. The ammonia is provided by the PdxT subunit. Can also use ribulose 5-phosphate and dihydroxyacetone phosphate as substrates, resulting from enzyme-catalyzed isomerization of RBP and G3P, respectively. This is Pyridoxal 5'-phosphate synthase subunit PdxS from Bacillus licheniformis (strain ATCC 14580 / DSM 13 / JCM 2505 / CCUG 7422 / NBRC 12200 / NCIMB 9375 / NCTC 10341 / NRRL NRS-1264 / Gibson 46).